A 345-amino-acid polypeptide reads, in one-letter code: UDP-3-O-acylglucosamine N-acyltransferase (345 aa).

His-239 acts as the Proton acceptor in catalysis.

The protein belongs to the transferase hexapeptide repeat family. LpxD subfamily. As to quaternary structure, homotrimer.

The catalysed reaction is a UDP-3-O-[(3R)-3-hydroxyacyl]-alpha-D-glucosamine + a (3R)-hydroxyacyl-[ACP] = a UDP-2-N,3-O-bis[(3R)-3-hydroxyacyl]-alpha-D-glucosamine + holo-[ACP] + H(+). Its pathway is bacterial outer membrane biogenesis; LPS lipid A biosynthesis. In terms of biological role, catalyzes the N-acylation of UDP-3-O-acylglucosamine using 3-hydroxyacyl-ACP as the acyl donor. Is involved in the biosynthesis of lipid A, a phosphorylated glycolipid that anchors the lipopolysaccharide to the outer membrane of the cell. The sequence is that of UDP-3-O-acylglucosamine N-acyltransferase from Geobacter metallireducens (strain ATCC 53774 / DSM 7210 / GS-15).